A 334-amino-acid polypeptide reads, in one-letter code: Regulatory protein E2 (334 aa).

Positions Met1 to Ser127 are transactivation domain. Residues Ser127–Ser240 are disordered. Positions Gly229–Ser240 are enriched in polar residues. The interval Asp251–Leu334 is DNA-binding domain.

Belongs to the papillomaviridae E2 protein family. As to quaternary structure, binds DNA as homodimer. Interacts with protein E1; this interaction greatly increases E1 DNA-binding activity. Interacts with protein L1; this interaction enhances E2-dependent replication and transcription activation. Interacts with protein L2; this interaction inhibits E2 transcriptional activity but not DNA replication function E2. Interacts with protein E7; this interaction inhibits E7 oncogenic activity. Interacts with host TAF1; this interaction modulates E2-dependent transcriptional regulation. Interacts with host BRD4; this interaction mediates E2 transcriptional activation function. Additionally, the interaction with host BRD4 on mitotic chromosomes mediates tethering of the viral genome. Interacts with host TOPBP1; this interaction is required for optimal viral DNA replication. In terms of processing, phosphorylated.

It is found in the host nucleus. Its function is as follows. Plays a role in the initiation of viral DNA replication. A dimer of E2 interacts with a dimer of E1 in order to improve specificity of E1 DNA binding activity. Once the complex recognizes and binds DNA at specific sites, the E2 dimer is removed from DNA. E2 also regulates viral transcription through binding to the E2RE response element (5'-ACCNNNNNNGGT-3') present in multiple copies in the regulatory regions of the viral genome. Activates or represses transcription depending on E2RE's position with regards to proximal promoter elements including the TATA-box. Repression occurs by sterically hindering the assembly of the transcription initiation complex. This chain is Regulatory protein E2, found in Bos taurus (Bovine).